The sequence spans 1273 residues: Ribulose bisphosphate carboxylase small subunit, chloroplastic (1273 aa).

Residues 1 to 134 (MPFDRQPLLS…AVLPFTSEKD (134 aa)) constitute a chloroplast transit peptide. Propeptides lie at residues 269-278 (GMAAMTGEKD), 412-421 (GMAAMTGEKD), 556-565 (GMAAMTGEKD), 699-708 (GMAAMTGEKD), 844-853 (GMAAMTGEKE), 987-996 (GMAAMTGEKD), and 1131-1140 (GMAAMTGEKE).

This sequence belongs to the RuBisCO small chain family. As to quaternary structure, heterohexadecamer of 8 large and 8 small subunits. In terms of processing, eight small subunits are processed from a large polyprotein. All start with the same sequence but there is more heterogeneity at the C-terminus.

It is found in the plastid. Its subcellular location is the chloroplast. Its function is as follows. RuBisCO catalyzes two reactions: the carboxylation of D-ribulose 1,5-bisphosphate, the primary event in carbon dioxide fixation, as well as the oxidative fragmentation of the pentose substrate. Both reactions occur simultaneously and in competition at the same active site. Although the small subunit is not catalytic it is essential for maximal activity. The protein is Ribulose bisphosphate carboxylase small subunit, chloroplastic of Euglena gracilis.